Reading from the N-terminus, the 429-residue chain is Adenylosuccinate synthetase (429 aa).

Residues 12–18 (GDEGKGK) and 40–42 (GHT) contribute to the GTP site. The Proton acceptor role is filled by D13. Mg(2+) is bound by residues D13 and G40. IMP contacts are provided by residues 13–16 (DEGK), 38–41 (NAGH), T128, R142, Q223, T238, and R302. H41 serves as the catalytic Proton donor. A substrate-binding site is contributed by 298 to 304 (VNTGRKR). GTP contacts are provided by residues R304, 330–332 (KLD), and 412–414 (GVG).

It belongs to the adenylosuccinate synthetase family. In terms of assembly, homodimer. Mg(2+) is required as a cofactor.

It is found in the cytoplasm. It catalyses the reaction IMP + L-aspartate + GTP = N(6)-(1,2-dicarboxyethyl)-AMP + GDP + phosphate + 2 H(+). The protein operates within purine metabolism; AMP biosynthesis via de novo pathway; AMP from IMP: step 1/2. In terms of biological role, plays an important role in the de novo pathway of purine nucleotide biosynthesis. Catalyzes the first committed step in the biosynthesis of AMP from IMP. This chain is Adenylosuccinate synthetase, found in Corynebacterium diphtheriae (strain ATCC 700971 / NCTC 13129 / Biotype gravis).